A 122-amino-acid polypeptide reads, in one-letter code: Large ribosomal subunit protein uL18 (122 aa).

It belongs to the universal ribosomal protein uL18 family. In terms of assembly, part of the 50S ribosomal subunit; part of the 5S rRNA/L5/L18/L25 subcomplex. Contacts the 5S and 23S rRNAs.

Its function is as follows. This is one of the proteins that bind and probably mediate the attachment of the 5S RNA into the large ribosomal subunit, where it forms part of the central protuberance. The protein is Large ribosomal subunit protein uL18 of Geobacter sp. (strain M21).